Reading from the N-terminus, the 505-residue chain is tRNA-2-methylthio-N(6)-dimethylallyladenosine synthase (505 aa).

In terms of domain architecture, MTTase N-terminal spans 14-132 (RTYEVRTYGC…LPVLLERARV (119 aa)). Residues cysteine 23, cysteine 61, cysteine 95, cysteine 169, cysteine 173, and cysteine 176 each coordinate [4Fe-4S] cluster. The 232-residue stretch at 155-386 (RESAYAAWVS…ALQEEISWDE (232 aa)) folds into the Radical SAM core domain. In terms of domain architecture, TRAM spans 388–456 (KKQVGRTLEL…PHHLLAEGAV (69 aa)).

It belongs to the methylthiotransferase family. MiaB subfamily. In terms of assembly, monomer. The cofactor is [4Fe-4S] cluster.

Its subcellular location is the cytoplasm. The enzyme catalyses N(6)-dimethylallyladenosine(37) in tRNA + (sulfur carrier)-SH + AH2 + 2 S-adenosyl-L-methionine = 2-methylsulfanyl-N(6)-dimethylallyladenosine(37) in tRNA + (sulfur carrier)-H + 5'-deoxyadenosine + L-methionine + A + S-adenosyl-L-homocysteine + 2 H(+). Functionally, catalyzes the methylthiolation of N6-(dimethylallyl)adenosine (i(6)A), leading to the formation of 2-methylthio-N6-(dimethylallyl)adenosine (ms(2)i(6)A) at position 37 in tRNAs that read codons beginning with uridine. In Streptomyces coelicolor (strain ATCC BAA-471 / A3(2) / M145), this protein is tRNA-2-methylthio-N(6)-dimethylallyladenosine synthase.